The primary structure comprises 305 residues: Protoheme IX farnesyltransferase (305 aa).

The next 9 membrane-spanning stretches (helical) occupy residues 31–51 (VMSLVIFTGFVGIWLAPYSVH), 52–72 (PFIAGIAVVCIALGAGSAGAI), 102–119 (ALSFGLITGFFAVFFMAL), 123–145 (LLASFLLLFTIFYYICIYTIWLK), 151–171 (NIVIGGVSGALPPVIGYAAVS), 179–199 (IILFLIIFIWTPPHSWALALF), 225–245 (ILIYSILLFIVSLMPFFIGMN), 247–267 (FIYLITSGILGLVFLYYSGSL), and 284–304 (SIFYLFFIFLLLSSTSTISLI).

The protein belongs to the UbiA prenyltransferase family. Protoheme IX farnesyltransferase subfamily.

It localises to the cell inner membrane. It carries out the reaction heme b + (2E,6E)-farnesyl diphosphate + H2O = Fe(II)-heme o + diphosphate. Its pathway is porphyrin-containing compound metabolism; heme O biosynthesis; heme O from protoheme: step 1/1. Its function is as follows. Converts heme B (protoheme IX) to heme O by substitution of the vinyl group on carbon 2 of heme B porphyrin ring with a hydroxyethyl farnesyl side group. This is Protoheme IX farnesyltransferase from Rickettsia felis (strain ATCC VR-1525 / URRWXCal2) (Rickettsia azadi).